An 83-amino-acid polypeptide reads, in one-letter code: Small ribosomal subunit protein bS20 (83 aa).

The segment at Met-1–Lys-25 is disordered. Over residues Thr-16–Lys-25 the composition is skewed to basic and acidic residues.

It belongs to the bacterial ribosomal protein bS20 family.

In terms of biological role, binds directly to 16S ribosomal RNA. This is Small ribosomal subunit protein bS20 from Staphylococcus saprophyticus subsp. saprophyticus (strain ATCC 15305 / DSM 20229 / NCIMB 8711 / NCTC 7292 / S-41).